The primary structure comprises 341 residues: MQYKKSLVASALVTTSLAAYAPKDPWSTLTPSATYKGGITDYSSTFGIAVEPIATTASSKAKRAAAISQIGDGQIQATTKTTAAAVSQIGDGQIQATTKTKAAAVSQIGDGQIQATTKTTSAKTTAAAVSQIGDGQIQATTKTKAAAVSQIGDGQIQATTKTTAAAVSQIGDGQIQATTKTTAAAVSQIGDGQIQATTNTTVAPVSQITDGQIQATTLTSATIIPSPAPAPITNGTDPVTAETCKSSGTLEMNLKGGILTDGKGRIGSIVANRQFQFDGPPPQAGAIYAAGWSITPEGNLAIGDQDTFYQCLSGNFYNLYDEHIGTQCNAVHLQAIDLVNC.

Positions 1 to 18 are cleaved as a signal peptide; sequence MQYKKSLVASALVTTSLA. Residues 19 to 63 constitute a propeptide that is removed on maturation; sequence AYAPKDPWSTLTPSATYKGGITDYSSTFGIAVEPIATTASSKAKR. PIR1/2/3 repeat units lie at residues 64–82, 83–101, 102–120, 126–144, 145–163, 164–182, 183–201, and 202–220; these read AAAISQIGDGQIQATTKTT, AAAVSQIGDGQIQATTKTK, AAAVSQIGDGQIQATTKTT, AAAVSQIGDGQIQATTNTT, and VAPVSQITDGQIQATTLTS.

Belongs to the PIR protein family. Post-translationally, covalently linked to beta-1,3-glucan of the inner cell wall layer via an alkali-sensitive ester linkage between the gamma-carboxyl group of glutamic acids, arising from specific glutamines within the PIR1/2/3 repeats, and hydroxyl groups of glucoses of beta-1,3-glucan chains. In terms of processing, O-glycosylated. Extensively O-mannosylated.

It localises to the secreted. It is found in the cell wall. In terms of biological role, component of the outer cell wall layer. Required for stability of the cell wall and for optimal growth. Required for resistance against several antifungal and cell wall-perturbing agents and for tolerance to heat shock. The chain is Cell wall mannoprotein PIR1 (PIR1) from Saccharomyces cerevisiae (strain RM11-1a) (Baker's yeast).